A 268-amino-acid polypeptide reads, in one-letter code: Ribosomal RNA small subunit methyltransferase A (268 aa).

Residues Asn23, Ile25, Gly50, Glu72, Asp97, and Asn116 each contribute to the S-adenosyl-L-methionine site.

It belongs to the class I-like SAM-binding methyltransferase superfamily. rRNA adenine N(6)-methyltransferase family. RsmA subfamily.

Its subcellular location is the cytoplasm. It carries out the reaction adenosine(1518)/adenosine(1519) in 16S rRNA + 4 S-adenosyl-L-methionine = N(6)-dimethyladenosine(1518)/N(6)-dimethyladenosine(1519) in 16S rRNA + 4 S-adenosyl-L-homocysteine + 4 H(+). In terms of biological role, specifically dimethylates two adjacent adenosines (A1518 and A1519) in the loop of a conserved hairpin near the 3'-end of 16S rRNA in the 30S particle. May play a critical role in biogenesis of 30S subunits. This is Ribosomal RNA small subunit methyltransferase A from Rickettsia bellii (strain RML369-C).